A 1165-amino-acid chain; its full sequence is Sperm-associated antigen 5 (1165 aa).

Residues 1-23 (MWRVKTLNLGLSPSPQKGKPAMS) are disordered. Phosphoserine is present on residues Ser12, Ser14, Ser66, Ser161, Ser321, Ser333, and Ser342. Residues 431 to 457 (TVPHREARDSSTQTDSSPCGVTKTPKH) are disordered. A compositionally biased stretch (polar residues) spans 440–449 (SSTQTDSSPC). Positions 453–821 (KTPKHLQDSK…LRDTVDSLRA (369 aa)) are interaction with KNSTRN. The stretch at 509 to 856 (RSKTLVSSCS…LLAEQLQSLT (348 aa)) forms a coiled coil. A disordered region spans residues 875–907 (PSTGSAPAQEHPLSNDSSISEQTPTAAVDEVPE). Residues 876–897 (STGSAPAQEHPLSNDSSISEQT) are compositionally biased toward polar residues. Positions 937–1146 (DLEKSLAEMS…IQHVYETLLS (210 aa)) form a coiled coil. Residue Ser946 is modified to Phosphoserine; by GSK3-beta.

As to quaternary structure, homodimer, with a globular head domain and a long stalk. Homooligomer; the globular head domains associate, resulting in aster-like structures. Binds to microtubules in the mitotic spindle. Interacts with DCLRE1B/Apollo. Part of an astrin (SPAG5)-kinastrin (SKAP) complex containing KNSTRN, SPAG5, PLK1, DYNLL1 and SGO2A. Interacts with KNSTRN. Interacts with RPTOR; this interaction competes with RPTOR binding to MTOR, resulting in decreased mTORC1 formation. Interacts with G3BP1. The complex formed with G3BP1 and RPTOR is increased by oxidative stress. Interacts with OSBPL8, PCM1 and CDK5RAP2. Interacts (via C-terminus) with NUMA1 (via C-terminus); this interaction promotes the recruitment of SPAG5 to the microtubules at spindle poles in a dynein-dynactin-dependent manner. Interacts with DYNLL1. Phosphorylated by AURKA. As to expression, detected in testis, but not in the other tissues tested.

It localises to the cytoplasm. The protein localises to the cytoskeleton. Its subcellular location is the spindle. It is found in the spindle pole. The protein resides in the chromosome. It localises to the centromere. The protein localises to the kinetochore. Its subcellular location is the midbody. It is found in the microtubule organizing center. The protein resides in the centrosome. It localises to the centriolar satellite. Its function is as follows. Essential component of the mitotic spindle required for normal chromosome segregation and progression into anaphase. Required for chromosome alignment, normal timing of sister chromatid segregation, and maintenance of spindle pole architecture. In complex with SKAP, promotes stable microtubule-kinetochore attachments. May contribute to the regulation of separase activity. May regulate AURKA localization to mitotic spindle, but not to centrosomes and CCNB1 localization to both mitotic spindle and centrosomes. Involved in centriole duplication. Required for CDK5RAP22, CEP152, WDR62 and CEP63 centrosomal localization and promotes the centrosomal localization of CDK2. In non-mitotic cells, upon stress induction, inhibits mammalian target of rapamycin complex 1 (mTORC1) association and recruits the mTORC1 component RPTOR to stress granules (SGs), thereby preventing mTORC1 hyperactivation-induced apoptosis. May enhance GSK3B-mediated phosphorylation of other substrates, such as MAPT/TAU. This chain is Sperm-associated antigen 5 (Spag5), found in Mus musculus (Mouse).